A 386-amino-acid polypeptide reads, in one-letter code: Glutamate 5-kinase (386 aa).

Lysine 28 contacts ATP. Substrate contacts are provided by serine 68, aspartate 155, and asparagine 167. Residue 187 to 188 (TD) participates in ATP binding. The 79-residue stretch at 294 to 372 (RGRLVLDDGA…EKIESILGYI (79 aa)) folds into the PUA domain.

This sequence belongs to the glutamate 5-kinase family.

The protein localises to the cytoplasm. It carries out the reaction L-glutamate + ATP = L-glutamyl 5-phosphate + ADP. Its pathway is amino-acid biosynthesis; L-proline biosynthesis; L-glutamate 5-semialdehyde from L-glutamate: step 1/2. In terms of biological role, catalyzes the transfer of a phosphate group to glutamate to form L-glutamate 5-phosphate. The polypeptide is Glutamate 5-kinase (Hahella chejuensis (strain KCTC 2396)).